A 475-amino-acid chain; its full sequence is Tubulin epsilon chain (475 aa).

Position 148 to 154 (148 to 154 (GGGTGSG)) interacts with GTP.

This sequence belongs to the tubulin family. In terms of assembly, found in a complex with TEDC1, TEDC2, TUBE1 and TUBD1.

The protein resides in the cytoplasm. The protein localises to the cytoskeleton. It is found in the microtubule organizing center. Its subcellular location is the centrosome. In Homo sapiens (Human), this protein is Tubulin epsilon chain (TUBE1).